We begin with the raw amino-acid sequence, 282 residues long: Ribonuclease 3 (282 aa).

In terms of domain architecture, RNase III spans 18 to 141 (FVAFFKSLNI…LVAAIYEDLG (124 aa)). Glutamate 59 provides a ligand contact to Mg(2+). Residue aspartate 63 is part of the active site. Aspartate 127 and glutamate 130 together coordinate Mg(2+). Glutamate 130 is a catalytic residue.

Belongs to the ribonuclease III family. As to quaternary structure, homodimer. Requires Mg(2+) as cofactor.

The protein localises to the cytoplasm. It carries out the reaction Endonucleolytic cleavage to 5'-phosphomonoester.. Functionally, digests double-stranded RNA. Involved in the processing of primary rRNA transcript to yield the immediate precursors to the large and small rRNAs (23S and 16S). Processes some mRNAs, and tRNAs when they are encoded in the rRNA operon. Processes pre-crRNA and tracrRNA of type II CRISPR loci if present in the organism. This is Ribonuclease 3 from Mycoplasmoides pneumoniae (strain ATCC 15531 / DSM 23978 / CIP 103766 / NBRC 14401 / NCTC 10119 / FH) (Mycoplasma pneumoniae).